Consider the following 2098-residue polypeptide: Non-reducing polyketide synthase crz7 (2098 aa).

Residues 8–243 form the Starter acyltransferase (SAT) domain; the sequence is ILFGDQTVDP…IKLPITAAFH (236 aa). One can recognise a Ketosynthase family 3 (KS3) domain in the interval 364-789; sequence SSDIAIIGFA…GGNTSLLLED (426 aa). Residues Cys532, His667, and His706 each act as for beta-ketoacyl synthase activity in the active site. Positions 887–1211 constitute a Malonyl-CoA:ACP transacylase (MAT) domain; sequence IFLFTGQGSQ…IANAYNSGVK (325 aa). The tract at residues 1270–1404 is N-terminal hotdog fold; sequence TCLQGVENET…CTVMYGDGQQ (135 aa). The 309-residue stretch at 1270 to 1578 folds into the PKS/mFAS DH domain; it reads TCLQGVENET…FQQMKRTTLQ (309 aa). The active-site Proton acceptor; for dehydratase activity is the His1305. A C-terminal hotdog fold region spans residues 1431–1578; it reads IHRMLKEMIY…FQQMKRTTLQ (148 aa). Asp1491 acts as the Proton donor; for dehydratase activity in catalysis. Positions 1613–1690 constitute a Carrier 1 domain; it reads QSPSAGFSKV…ELRAFFLDKM (78 aa). Ser1650 is subject to O-(pantetheine 4'-phosphoryl)serine. The interval 1693 to 1725 is disordered; that stretch reads PQATANDDDSDDSSEDEDPGYSRSQSNSTISTP. The segment covering 1698–1711 has biased composition (acidic residues); sequence NDDDSDDSSEDEDP. A compositionally biased stretch (polar residues) spans 1714 to 1724; sequence SRSQSNSTIST. In terms of domain architecture, Carrier 2 spans 1725–1802; it reads PEEPDVVSIL…DVQKALGPTS (78 aa). Ser1762 carries the O-(pantetheine 4'-phosphoryl)serine modification. A thioesterase (TE) domain region spans residues 1844 to 2080; sequence LFLLPDGAGS…VSGNHFSIMF (237 aa).

Requires pantetheine 4'-phosphate as cofactor.

It functions in the pathway secondary metabolite biosynthesis. Its function is as follows. Non-reducing polyketide synthase; part of the gene cluster that mediates the biosynthesis of the red pigment cristazarin, a naphthazarin derivative. The polyketide product of crz7 is likely 2-acetyl-1,3,6,8-tetrahydoxynaphthalene (AT4HN) from which a probable biosynthetic route of cristazarin can be deduced. The presence of two O-methyltransferases (crz1 and crz2), an enoyl reductase (crz5), an oxidase (crz8), and a short-chain dehydrogenase (crz9) encoded in the cristazarin biosynthetic cluster is consistent with methylation of a hydroxyl group, addition of two hydroxyl groups to the naphthalene core ring, and reduction of the acetyl side chain. This Cladonia metacorallifera (Lichen-forming fungus) protein is Non-reducing polyketide synthase crz7.